The primary structure comprises 495 residues: Phosphomethylpyrimidine synthase (495 aa).

Residues N125, M154, Y183, H219, 239–241, 280–283, and E319 contribute to the substrate site; these read SRG and DGLR. Zn(2+) is bound at residue H323. Y346 is a binding site for substrate. H387 provides a ligand contact to Zn(2+). The [4Fe-4S] cluster site is built by C467, C470, and C475.

This sequence belongs to the ThiC family. The cofactor is [4Fe-4S] cluster.

It catalyses the reaction 5-amino-1-(5-phospho-beta-D-ribosyl)imidazole + S-adenosyl-L-methionine = 4-amino-2-methyl-5-(phosphooxymethyl)pyrimidine + CO + 5'-deoxyadenosine + formate + L-methionine + 3 H(+). Its pathway is cofactor biosynthesis; thiamine diphosphate biosynthesis. Catalyzes the synthesis of the hydroxymethylpyrimidine phosphate (HMP-P) moiety of thiamine from aminoimidazole ribotide (AIR) in a radical S-adenosyl-L-methionine (SAM)-dependent reaction. The chain is Phosphomethylpyrimidine synthase from Leptospira interrogans serogroup Icterohaemorrhagiae serovar Lai (strain 56601).